A 430-amino-acid polypeptide reads, in one-letter code: CinA-like protein (430 aa).

It belongs to the CinA family.

This Mycobacterium tuberculosis (strain ATCC 25177 / H37Ra) protein is CinA-like protein.